The sequence spans 445 residues: Glutamate-1-semialdehyde 2,1-aminomutase (445 aa).

K263 carries the post-translational modification N6-(pyridoxal phosphate)lysine.

Belongs to the class-III pyridoxal-phosphate-dependent aminotransferase family. HemL subfamily. Requires pyridoxal 5'-phosphate as cofactor.

It localises to the cytoplasm. It catalyses the reaction (S)-4-amino-5-oxopentanoate = 5-aminolevulinate. It functions in the pathway porphyrin-containing compound metabolism; protoporphyrin-IX biosynthesis; 5-aminolevulinate from L-glutamyl-tRNA(Glu): step 2/2. This chain is Glutamate-1-semialdehyde 2,1-aminomutase, found in Halorubrum lacusprofundi (strain ATCC 49239 / DSM 5036 / JCM 8891 / ACAM 34).